Consider the following 520-residue polypeptide: Translation initiation factor IF3-1, mitochondrial (520 aa).

The transit peptide at 1-66 directs the protein to the mitochondrion; it reads MAIWRIINRS…SNIFQNLRFL (66 aa). Over residues 271–282 the composition is skewed to basic and acidic residues; that stretch reads ARVKEESPKPDS. The interval 271–520 is disordered; sequence ARVKEESPKP…YGIFSTPKTK (250 aa). Residues 336 to 361 are compositionally biased toward polar residues; the sequence is EPQSPNQHVNPQRPRFSNQAPNQQPT. Residues 369 to 379 are compositionally biased toward pro residues; that stretch reads PNQPPSAPRPQ. Polar residues-rich tracts occupy residues 404–422 and 458–468; these read NQAP…FPNQ and FQNQAPNQQPT. Over residues 473-485 the composition is skewed to pro residues; that stretch reads PQPPNPPRAPPRP.

This sequence belongs to the IF-3 family. As to quaternary structure, monomer.

The protein localises to the mitochondrion. In terms of biological role, IF-3 binds to the 30S ribosomal subunit and shifts the equilibrium between 70S ribosomes and their 50S and 30S subunits in favor of the free subunits, thus enhancing the availability of 30S subunits on which protein synthesis initiation begins. The chain is Translation initiation factor IF3-1, mitochondrial from Arabidopsis thaliana (Mouse-ear cress).